A 200-amino-acid chain; its full sequence is Adenylate kinase (200 aa).

Position 10-15 (10-15) interacts with ATP; sequence GAGKGT. Positions 30–59 are NMP; sequence STGDMLRAAVAAETPVGLEAKAIMESGGLV. Residues threonine 31, arginine 36, 57-59, 85-88, and glutamine 92 contribute to the AMP site; these read GLV and GFPR. The segment at 126–142 is LID; that stretch reads KRAEETAARGQPVRKDD. Arginine 127 contributes to the ATP binding site. 2 residues coordinate AMP: arginine 139 and arginine 150. Residue lysine 178 coordinates ATP.

This sequence belongs to the adenylate kinase family. In terms of assembly, monomer.

It is found in the cytoplasm. The catalysed reaction is AMP + ATP = 2 ADP. It functions in the pathway purine metabolism; AMP biosynthesis via salvage pathway; AMP from ADP: step 1/1. Catalyzes the reversible transfer of the terminal phosphate group between ATP and AMP. Plays an important role in cellular energy homeostasis and in adenine nucleotide metabolism. This chain is Adenylate kinase, found in Methylorubrum extorquens (strain PA1) (Methylobacterium extorquens).